We begin with the raw amino-acid sequence, 100 residues long: Urease subunit gamma (100 aa).

It belongs to the urease gamma subunit family. As to quaternary structure, heterotrimer of UreA (gamma), UreB (beta) and UreC (alpha) subunits. Three heterotrimers associate to form the active enzyme.

The protein resides in the cytoplasm. The enzyme catalyses urea + 2 H2O + H(+) = hydrogencarbonate + 2 NH4(+). It functions in the pathway nitrogen metabolism; urea degradation; CO(2) and NH(3) from urea (urease route): step 1/1. This is Urease subunit gamma from Prochlorococcus marinus (strain NATL2A).